Consider the following 507-residue polypeptide: Probable circularly permuted 1,3-beta-glucanase P23A10.11c YJL171C (507 aa).

An N-terminal signal peptide occupies residues 1–22 (MIAKSFIASFLFLCFAFSGVKA). Positions 228-264 (AAPPDSASESTPASTSYASSTTSATSTSTTSGSSGSS) are enriched in low complexity. The tract at residues 228–266 (AAPPDSASESTPASTSYASSTTSATSTSTTSGSSGSSDW) is disordered. The ExDxxE motif signature appears at 412-417 (EFDIFE). N480 carries an N-linked (GlcNAc...) asparagine glycan.

The protein belongs to the PGA52 family.

The protein localises to the secreted. The catalysed reaction is Hydrolysis of (1-&gt;3)-beta-D-glucosidic linkages in (1-&gt;3)-beta-D-glucans.. Functionally, probable circularly permuted 1,3-beta-glucanase involved in cell wall modification through beta-1,3-glucan network alterations such as increased branching or remodeling. This Schizosaccharomyces pombe (strain 972 / ATCC 24843) (Fission yeast) protein is Probable circularly permuted 1,3-beta-glucanase P23A10.11c YJL171C.